Consider the following 143-residue polypeptide: Mini-ribonuclease 3 (143 aa).

The active site involves Asp-35.

The protein belongs to the MrnC RNase family. Homodimer. The cofactor is Mg(2+).

The protein resides in the cytoplasm. Its function is as follows. Involved in correct processing of both the 5' and 3' ends of 23S rRNA precursor. Processes 30S rRNA precursor transcript even in absence of ribonuclease 3 (Rnc); Rnc processes 30S rRNA into smaller rRNA precursors. This Synechocystis sp. (strain ATCC 27184 / PCC 6803 / Kazusa) protein is Mini-ribonuclease 3.